The following is a 1665-amino-acid chain: Mediator of RNA polymerase II transcription subunit 13 (1665 aa).

4 disordered regions span residues 411–460 (KETE…IDKN), 482–512 (INLDSKIMPPDSTSEEAVPDKENFKPKETKP), 551–580 (TVSQSAVTTNPPSVGSAPGPAPGPAPGTET), and 673–781 (LDSS…NQIS). Positions 415 to 445 (PENESENDMEIDDLFGGDESDDNDDLEEAGN) are enriched in acidic residues. Over residues 499-512 (VPDKENFKPKETKP) the composition is skewed to basic and acidic residues. A compositionally biased stretch (low complexity) spans 551-568 (TVSQSAVTTNPPSVGSAP). Over residues 682–720 (EGGEDIEDDDNDYEDEGDDDEEEEGEEEEEEESDEDEIS) the composition is skewed to acidic residues. Positions 728-762 (LKLNTQNESVPPQQSNYNPVNITDSGSNTTNNITD) are enriched in polar residues.

The protein belongs to the Mediator complex subunit 13 family. Component of the SRB8-11 complex, which itself associates with the Mediator complex.

The protein resides in the nucleus. Component of the SRB8-11 complex. The SRB8-11 complex is a regulatory module of the Mediator complex which is itself involved in regulation of basal and activated RNA polymerase II-dependent transcription. The SRB8-11 complex may be involved in the transcriptional repression of a subset of genes regulated by Mediator. It may inhibit the association of the Mediator complex with RNA polymerase II to form the holoenzyme complex. The sequence is that of Mediator of RNA polymerase II transcription subunit 13 (SSN2) from Candida albicans (strain SC5314 / ATCC MYA-2876) (Yeast).